The following is a 153-amino-acid chain: Histone H2B.6 (153 aa).

Composition is skewed to basic and acidic residues over residues 1 to 28 (MAPKAEKKPAAKKPAEEEPAAEKAEKAP) and 36 to 53 (EKRLPAGKGEKGSGEGKK). A disordered region spans residues 1-60 (MAPKAEKKPAAKKPAEEEPAAEKAEKAPAGKKPKAEKRLPAGKGEKGSGEGKKAGRKKGK). Lys-7 and Lys-37 each carry N6-acetyllysine. Residue Lys-149 forms a Glycyl lysine isopeptide (Lys-Gly) (interchain with G-Cter in ubiquitin) linkage.

This sequence belongs to the histone H2B family. In terms of assembly, the nucleosome is a histone octamer containing two molecules each of H2A, H2B, H3 and H4 assembled in one H3-H4 heterotetramer and two H2A-H2B heterodimers. The octamer wraps approximately 147 bp of DNA. Can be acetylated to form H2BK6ac and H2BK33ac. In terms of processing, monoubiquitinated by BRE1 to form H2BK143ub1 and deubiquitinated by UBP26. Required for heterochromatic histone H3 di- and trimethylation at H3K4me. May give a specific tag for epigenetic transcriptional activation.

It localises to the nucleus. The protein resides in the chromosome. Functionally, core component of nucleosome. Nucleosomes wrap and compact DNA into chromatin, limiting DNA accessibility to the cellular machineries which require DNA as a template. Histones thereby play a central role in transcription regulation, DNA repair, DNA replication and chromosomal stability. DNA accessibility is regulated via a complex set of post-translational modifications of histones, also called histone code, and nucleosome remodeling. This chain is Histone H2B.6 (H2B.6), found in Oryza sativa subsp. indica (Rice).